A 329-amino-acid polypeptide reads, in one-letter code: tRNA (cytidine(32)/guanosine(34)-2'-O)-methyltransferase (329 aa).

Residues Gly53, Trp55, Asp75, Asp91, and Asp116 each coordinate S-adenosyl-L-methionine. Lys156 acts as the Proton acceptor in catalysis. The interval Asp221–Asp240 is required for binding to WDR6. Ser271 is modified (phosphoserine).

This sequence belongs to the class I-like SAM-binding methyltransferase superfamily. RNA methyltransferase RlmE family. TRM7 subfamily. In terms of assembly, interacts with WDR6; the interaction is direct, and required for 2'-O-methylation of position 34 in substrate tRNAs. In terms of tissue distribution, found in fetal brain, lung, liver and kidney. Widely expressed in adult tissue; with high expression in heart and liver, lower expression in skeletal muscle, kidney, and pancreas and also lowly expressed in brain and lung. In the adult brain, expressed in amygdala, caudate nucleus, corpus callosum, hippocampus and thalamus.

It is found in the cytoplasm. The protein localises to the nucleus. It carries out the reaction cytidine(32)/guanosine(34) in tRNA + 2 S-adenosyl-L-methionine = 2'-O-methylcytidine(32)/2'-O-methylguanosine(34) in tRNA + 2 S-adenosyl-L-homocysteine + 2 H(+). Its activity is regulated as follows. Inhibited by 2,6-diaminopurine (DAP); inhibition promotes UGA stop-codon readthrough during translation by misincorporation of tRNA(Trp) in the nascent polypeptide. In terms of biological role, methylates the 2'-O-ribose of nucleotides at positions 32 and 34 of the tRNA anticodon loop of substrate tRNAs. Requisite for faithful cytoplasmic translation. Requires THADA for methylation of the nucleotide at position 32 of the anticodon loop of substrate tRNAs. Requires WDR6 for methylation of the nucleotide at position 34 of the anticodon loop of substrate tRNAs. Promotes translation efficiency of the UUU codon. Plays a role in neurogenesis. Required for expression of genes involved in neurogenesis, mitochondrial translation and energy generation, and lipid biosynthesis. Requisite for RNA-mediated gene silencing. May modify position 32 in tRNA(Arg(ACG)), tRNA(Arg(CCG)), tRNA(Arg(UCG)), tRNA(Cys(GCA)), tRNA(Cys(ACA)), tRNA(Gln(CUG)), tRNA(Gln(UUG)), tRNA(Gly(CCC)), tRNA(Leu(CAG))/tRNA(Leu(CAA)), tRNA(Leu(A/IAG)), tRNA(Leu(UAG)), tRNA(Phe(GAA)), tRNA(Pro(AGG))/tRNA(Pro(CGG))/tRNA(Pro(UGG)) and tRNA(Trp(CCA)), and position 34 in tRNA(Phe(GAA)), tRNA(Leu(CAA)), tRNA(Sec(UCA)), and tRNA(Trp(CCA)). In Homo sapiens (Human), this protein is tRNA (cytidine(32)/guanosine(34)-2'-O)-methyltransferase.